We begin with the raw amino-acid sequence, 779 residues long: Potassium/sodium hyperpolarization-activated cyclic nucleotide-gated channel 3 (779 aa).

Residues 1–47 (MEEEARPAAGAGEAATPARETPPAAPAQARAASGGVPESAPEPKRRQ) are disordered. The Cytoplasmic segment spans residues 1-96 (MEEEARPAAG…PYSDFRFYWD (96 aa)). The span at 7 to 32 (PAAGAGEAATPARETPPAAPAQARAA) shows a compositional bias: low complexity. An involved in subunit assembly region spans residues 45–90 (RRQLGTLLQPTVNKFSLRVFGSHKAVEIEQERVKSAGAWIIHPYSD). Residues 97–117 (LIMLLLMVGNLIVLPVGITFF) form a helical membrane-spanning segment. Residues 118-123 (KEENSP) lie on the Extracellular side of the membrane. Residues 124 to 144 (PWIVFNVLSDTFFLLDLVLNF) form a helical membrane-spanning segment. Residues 145 to 170 (RTGIVVEEGAEILLAPRAIRTRYLRT) lie on the Cytoplasmic side of the membrane. A helical transmembrane segment spans residues 171 to 191 (WFLVDLISSIPVDYIFLVVEL). Residues 192 to 200 (EPRLDAEVY) lie on the Extracellular side of the membrane. The chain crosses the membrane as a helical; Voltage-sensor span at residues 201–221 (KTARALRIVRFTKILSLLRLL). At 222–252 (RLSRLIRYIHQWEEIFHMTYDLASAVVRIFN) the chain is on the cytoplasmic side. The helical transmembrane segment at 253 to 273 (LIGMMLLLCHWDGCLQFLVPM) threads the bilayer. Residues 274–296 (LQDFPSDCWVSMNRMVNHSWGRQ) are Extracellular-facing. N290 carries an N-linked (GlcNAc...) asparagine glycan. An intramembrane region (pore-forming) is located at residues 297–318 (YSHALFKAMSHMLCIGYGQQAP). The Extracellular segment spans residues 319-328 (VGMPDVWLTM). A helical transmembrane segment spans residues 329 to 349 (LSMIVGATCYAMFIGHATALI). The Cytoplasmic portion of the chain corresponds to 350–779 (QSLDSSRRQY…PRGPQISANM (430 aa)). The tract at residues 353–779 (DSSRRQYQEK…PRGPQISANM (427 aa)) is interaction with KCTD3. Positions 491, 492, 494, 501, 502, 542, and 545 each coordinate 3',5'-cyclic AMP. A disordered region spans residues 549-569 (KNSILQRKRSEPSPGSSGGVM). Residue S633 is modified to Phosphoserine. Polar residues predominate over residues 687–697 (SLSRTGRSQVS). Residues 687 to 779 (SLSRTGRSQV…PRGPQISANM (93 aa)) are disordered.

The protein belongs to the potassium channel HCN family. In terms of assembly, homotetramer. The potassium channel is composed of a homo- or heterotetrameric complex of pore-forming subunits. Interacts with HCN1. Interacts with KCTD3; this interaction increases cell surface expression and current density of this channel. Interacts with PEX5L. As to expression, detected in hypothalamus, amygdala, olfactory bulb, hippocampus and retina (at protein level). Highly expressed in brain and heart, in particular in ventricle, atrium and in sinoatrial node (SAN). Detected at low levels in skeletal muscle and lung. Expressed in DRG neurons.

Its subcellular location is the cell membrane. The catalysed reaction is K(+)(in) = K(+)(out). The enzyme catalyses Na(+)(in) = Na(+)(out). With respect to regulation, unlike HCN2 and HCN4, HCN3 is insensitive to cyclic nucleotides, such as cAMP or cGMP. This lack of sensitivity of HCN3, despite harboring a functional cyclic nucleotide-binding domain (CNBD), may be explained by its shorter C-terminal sequence, which may alter the normal autoinhibition of the channel. Inhibited by Cs(1+) and ivabradine. Phosphatidylinositol-4,5-bisphosphate (PIP(2)) shifts HCN3 activation to more depolarized potentials and accelerated activation kinetics. In terms of biological role, hyperpolarization-activated ion channel that are permeable to sodium and potassium ions, with an about 3:1 preference for potassium ions. Contributes to the native pacemaker currents in heart (If) and in neurons (Ih). In particular, plays a pivotal role in maintaining excitability and promoting rhythmic burst firing within hypothalamic nuclei. Exerts a significant influence on the configuration of the cardiac action potential waveform. Does not appear to play a prominent role in the processing of acute, neuropathic, or inflammatory pain. The chain is Potassium/sodium hyperpolarization-activated cyclic nucleotide-gated channel 3 (Hcn3) from Mus musculus (Mouse).